The following is a 381-amino-acid chain: p55-v-Fos-transforming protein (381 aa).

In terms of domain architecture, bZIP spans 137–200; it reads EEKRRIRRER…EKLEFILAAH (64 aa). Positions 139–159 are basic motif; the sequence is KRRIRRERNKMAAAKCRNRRR. The segment at 165–193 is leucine-zipper; the sequence is LQAETDQLEDKKSALQTEIANLLKEKEKL.

The protein belongs to the bZIP family. Fos subfamily.

It localises to the host nucleus. The protein is p55-v-Fos-transforming protein (V-FOS) of Mus musculus (Mouse).